Reading from the N-terminus, the 1130-residue chain is Sodium/potassium/calcium exchanger 1 (1130 aa).

At Met-1–Gln-419 the chain is on the extracellular side. The disordered stretch occupies residues Pro-104–Glu-209. Over residues Leu-125 to Thr-136 the composition is skewed to polar residues. Positions Pro-170–Arg-187 are enriched in basic and acidic residues. N-linked (GlcNAc...) asparagine glycosylation is found at Asn-176 and Asn-273. The segment at Ile-274–Thr-295 is disordered. Residues Thr-286–Thr-295 are compositionally biased toward polar residues. Residues Gly-420–Cys-440 form a helical membrane-spanning segment. At Asp-441–Ala-464 the chain is on the cytoplasmic side. The stretch at Val-461 to Phe-501 is one Alpha-1 repeat. The chain crosses the membrane as a helical span at residues Thr-465–Ile-485. Topologically, residues Ser-486–Asn-489 are extracellular. Residues Val-490–Cys-510 form a helical membrane-spanning segment. Over Ala-511–Ser-530 the chain is Cytoplasmic. A helical membrane pass occupies residues Phe-531–Trp-551. Glu-552 is a topological domain (extracellular). The chain crosses the membrane as a helical span at residues Ser-553 to Ile-573. The Cytoplasmic segment spans residues Glu-574–Lys-938. Positions Pro-598–Val-619 are disordered. Ser-625 is modified (phosphoserine). The interval Gly-650 to Trp-932 is disordered. A compositionally biased stretch (polar residues) spans Ser-661–Glu-675. Thr-690 is modified (phosphothreonine). Over residues Gln-703–Glu-715 the composition is skewed to acidic residues. The span at Glu-730–Asp-751 shows a compositional bias: basic and acidic residues. 2 stretches are compositionally biased toward acidic residues: residues Gly-766 to Glu-782 and Gln-802 to Glu-820. Basic and acidic residues predominate over residues Ala-833–Gln-855. 2 stretches are compositionally biased toward acidic residues: residues Gly-870 to Cys-880 and Asp-896 to Leu-928. Residues Gln-939–Val-959 traverse the membrane as a helical segment. Residues Arg-960 to Lys-966 are Extracellular-facing. Residues Phe-967–Val-987 traverse the membrane as a helical segment. The Cytoplasmic segment spans residues Trp-988–Glu-1002. The helical transmembrane segment at Ile-1003–Ile-1023 threads the bilayer. The Alpha-2 repeat unit spans residues Ala-1010–Asn-1041. The Extracellular segment spans residues Val-1024–Asn-1041. Residues Ile-1042 to Leu-1062 traverse the membrane as a helical segment. Topologically, residues Gln-1063–Asn-1070 are cytoplasmic. Residues Gly-1071–Ala-1091 traverse the membrane as a helical segment. Topologically, residues Ser-1092 to Lys-1099 are extracellular. The chain crosses the membrane as a helical span at residues Ile-1100–Glu-1120. The Cytoplasmic portion of the chain corresponds to Asp-1121–Val-1130.

This sequence belongs to the Ca(2+):cation antiporter (CaCA) (TC 2.A.19) family. SLC24A subfamily. The uncleaved signal sequence is required for efficient membrane targeting and proper membrane integration and topology.

The protein localises to the cell membrane. The enzyme catalyses Ca(2+)(out) + K(+)(out) + 4 Na(+)(in) = Ca(2+)(in) + K(+)(in) + 4 Na(+)(out). Calcium, potassium:sodium antiporter that transports 1 Ca(2+) and 1 K(+) in exchange for 4 Na(+). Critical component of the visual transduction cascade, controlling the calcium concentration of outer segments during light and darkness. Light causes a rapid lowering of cytosolic free calcium in the outer segment of both retinal rod and cone photoreceptors and the light-induced lowering of calcium is caused by extrusion via this protein which plays a key role in the process of light adaptation. The protein is Sodium/potassium/calcium exchanger 1 of Mus musculus (Mouse).